A 208-amino-acid chain; its full sequence is N-(5'-phosphoribosyl)anthranilate isomerase (208 aa).

Belongs to the TrpF family.

It catalyses the reaction N-(5-phospho-beta-D-ribosyl)anthranilate = 1-(2-carboxyphenylamino)-1-deoxy-D-ribulose 5-phosphate. It functions in the pathway amino-acid biosynthesis; L-tryptophan biosynthesis; L-tryptophan from chorismate: step 3/5. The polypeptide is N-(5'-phosphoribosyl)anthranilate isomerase (Lactiplantibacillus plantarum (strain ATCC BAA-793 / NCIMB 8826 / WCFS1) (Lactobacillus plantarum)).